We begin with the raw amino-acid sequence, 727 residues long: E3 ubiquitin-protein ligase LRSAM1 (727 aa).

LRR repeat units follow at residues 30-51, 56-77, 82-103, 105-126, 128-150, and 151-172; these read ADDILDISKCELSEIPFGAFAT, QKKVLIVHTNHLTSLLPKSCSL, TIKVLDLHENQLTALPDDMGQL, VLQVLNVERNQLTHLPRSIGNL, QLQTLNVKDNKLKELPDTLGELR, and SLRTLDISENEIQRLPQMLAHV. The segment at 227–248 is disordered; sequence GAENTQDSPDGPASRFSREEAE. Ser234 carries the post-translational modification Phosphoserine. Coiled coils occupy residues 241–382 and 469–547; these read RFSR…NLRQ and RQIR…QENY. The 64-residue stretch at 569–632 folds into the SAM domain; it reads GMERRLVALL…LRRAQDLLAV (64 aa). Position 604 is a phosphoserine (Ser604). Short sequence motifs (PTAP motif) lie at residues 653–656 and 665–668; these read PTAP and PSAP. The RING-type zinc finger occupies 679 to 714; the sequence is CVVCLEREAQMVFLTCGHVCCCQQCCQPLRTCPLCR.

In terms of assembly, interacts with TSG101. Interacts with PHF23. Interacts with FUS. In terms of processing, ubiquitination promoted by PHF23 leads to proteasomal degradation. Widely expressed.

The protein localises to the cytoplasm. It carries out the reaction S-ubiquitinyl-[E2 ubiquitin-conjugating enzyme]-L-cysteine + [acceptor protein]-L-lysine = [E2 ubiquitin-conjugating enzyme]-L-cysteine + N(6)-ubiquitinyl-[acceptor protein]-L-lysine.. Its pathway is protein modification; protein ubiquitination. In terms of biological role, E3 ubiquitin-protein ligase that mediates monoubiquitination of TSG101 at multiple sites, leading to inactivate the ability of TSG101 to sort endocytic (EGF receptors) and exocytic (viral proteins) cargos. Bacterial recognition protein that defends the cytoplasm from invasive pathogens. Localizes to several intracellular bacterial pathogens and generates the bacteria-associated ubiquitin signal leading to autophagy-mediated intracellular bacteria degradation (xenophagy). This Mus musculus (Mouse) protein is E3 ubiquitin-protein ligase LRSAM1.